The chain runs to 535 residues: Lecithin-cholesterol acyltransferase-like 4 (535 aa).

Ser2 bears the N-acetylserine mark. Ser182 serves as the catalytic Acyl-ester intermediate. Residues Asp391 and His416 each act as charge relay system in the active site. Residues 488 to 505 show a composition bias toward polar residues; sequence STVNSISVSQPGDDQNPQ. Positions 488–507 are disordered; that stretch reads STVNSISVSQPGDDQNPQAE.

The protein belongs to the AB hydrolase superfamily. Lipase family.

This chain is Lecithin-cholesterol acyltransferase-like 4 (LCAT4), found in Arabidopsis thaliana (Mouse-ear cress).